Reading from the N-terminus, the 321-residue chain is Ferrochelatase (321 aa).

2 residues coordinate Fe cation: histidine 194 and glutamate 275.

The protein belongs to the ferrochelatase family.

Its subcellular location is the cytoplasm. It carries out the reaction heme b + 2 H(+) = protoporphyrin IX + Fe(2+). Its pathway is porphyrin-containing compound metabolism; protoheme biosynthesis; protoheme from protoporphyrin-IX: step 1/1. Catalyzes the ferrous insertion into protoporphyrin IX. The polypeptide is Ferrochelatase (Wigglesworthia glossinidia brevipalpis).